The following is a 93-amino-acid chain: Small ribosomal subunit protein bS20c (93 aa).

Belongs to the bacterial ribosomal protein bS20 family.

The protein localises to the plastid. The protein resides in the chloroplast. Binds directly to 16S ribosomal RNA. The protein is Small ribosomal subunit protein bS20c of Phaeodactylum tricornutum (strain CCAP 1055/1).